A 77-amino-acid polypeptide reads, in one-letter code: Neurexophilin-4 (77 aa).

Residues 1-77 (NCHVEYEKTN…NFQSEHPYFG (77 aa)) form a v (Cys-rich) region.

This sequence belongs to the neurexophilin family. May be proteolytically processed at the boundary between the N-terminal non-conserved and the central conserved domain in neuron-like cells.

The protein resides in the secreted. Its function is as follows. May be signaling molecules that resemble neuropeptides and that act by binding to alpha-neurexins and possibly other receptors. This chain is Neurexophilin-4 (NXPH4), found in Macaca mulatta (Rhesus macaque).